Consider the following 700-residue polypeptide: ABC transporter B family member 26, chloroplastic (700 aa).

The transit peptide at 1–59 (MAQQVLGCTSRPIRVSLHRCSVITTSDTIRRKNLRFVRNPRLSFSLQSSTRNYRLPSIN) directs the protein to the chloroplast. 3 helical membrane passes run 137 to 157 (WVIF…ITIP), 182 to 202 (LVTL…FFGI), and 268 to 288 (LIYL…ICCI). Residues 139–421 (IFAAFSTLIV…VGDNLSSLMQ (283 aa)) enclose the ABC transmembrane type-1 domain. The 240-residue stretch at 455-694 (IEFVDVSFSY…DGLYARLTKR (240 aa)) folds into the ABC transporter domain. Residue 490–497 (GLSGSGKS) participates in ATP binding.

The protein belongs to the ABC transporter superfamily. ABCB family. Multidrug resistance exporter (TC 3.A.1.201) subfamily.

The protein localises to the plastid. The protein resides in the chloroplast membrane. The chain is ABC transporter B family member 26, chloroplastic (ABCB26) from Arabidopsis thaliana (Mouse-ear cress).